We begin with the raw amino-acid sequence, 208 residues long: Uracil phosphoribosyltransferase (208 aa).

Residues Arg78, Arg103, and 130–138 (DPMLATGGS) contribute to the 5-phospho-alpha-D-ribose 1-diphosphate site. Uracil is bound by residues Ile193 and 198–200 (GDA). Asp199 serves as a coordination point for 5-phospho-alpha-D-ribose 1-diphosphate.

It belongs to the UPRTase family. Mg(2+) is required as a cofactor.

The catalysed reaction is UMP + diphosphate = 5-phospho-alpha-D-ribose 1-diphosphate + uracil. Its pathway is pyrimidine metabolism; UMP biosynthesis via salvage pathway; UMP from uracil: step 1/1. Allosterically activated by GTP. In terms of biological role, catalyzes the conversion of uracil and 5-phospho-alpha-D-ribose 1-diphosphate (PRPP) to UMP and diphosphate. The protein is Uracil phosphoribosyltransferase of Thermus thermophilus (strain ATCC 27634 / DSM 579 / HB8).